The following is a 552-amino-acid chain: Urocanate hydratase (552 aa).

NAD(+) contacts are provided by residues 49 to 50, Gln-127, 173 to 175, Asp-193, 239 to 240, 260 to 264, 270 to 271, and Tyr-319; these read GG, GMG, NA, QTSAH, and YI. The active site involves Cys-407. Position 489 (Gly-489) interacts with NAD(+).

It belongs to the urocanase family. The cofactor is NAD(+).

It localises to the cytoplasm. It catalyses the reaction 4-imidazolone-5-propanoate = trans-urocanate + H2O. Its pathway is amino-acid degradation; L-histidine degradation into L-glutamate; N-formimidoyl-L-glutamate from L-histidine: step 2/3. In terms of biological role, catalyzes the conversion of urocanate to 4-imidazolone-5-propionate. In Bacillus cereus (strain G9842), this protein is Urocanate hydratase.